A 260-amino-acid polypeptide reads, in one-letter code: Hydroxyethylthiazole kinase 1 (260 aa).

Methionine 39 contributes to the substrate binding site. Residues arginine 115 and threonine 160 each contribute to the ATP site. Position 187 (glycine 187) interacts with substrate.

This sequence belongs to the Thz kinase family. The cofactor is Mg(2+).

It carries out the reaction 5-(2-hydroxyethyl)-4-methylthiazole + ATP = 4-methyl-5-(2-phosphooxyethyl)-thiazole + ADP + H(+). It participates in cofactor biosynthesis; thiamine diphosphate biosynthesis; 4-methyl-5-(2-phosphoethyl)-thiazole from 5-(2-hydroxyethyl)-4-methylthiazole: step 1/1. Its function is as follows. Catalyzes the phosphorylation of the hydroxyl group of 4-methyl-5-beta-hydroxyethylthiazole (THZ). This chain is Hydroxyethylthiazole kinase 1, found in Streptococcus pneumoniae (strain Hungary19A-6).